Reading from the N-terminus, the 617-residue chain is Syncytin-A (617 aa).

The signal sequence occupies residues 1–17 (MVRPWVFCLLLFPCSSA). The Extracellular portion of the chain corresponds to 18 to 544 (YSDSWMPLVN…WIQWLGLGPW (527 aa)). A glycan (N-linked (GlcNAc...) asparagine) is linked at asparagine 27. Residues 44–47 (CWVC) carry the CXXC motif. Intrachain disulfides connect cysteine 44/cysteine 47, cysteine 44/cysteine 505, and cysteine 497/cysteine 504. 2 N-linked (GlcNAc...) asparagine glycosylation sites follow: asparagine 272 and asparagine 365. The segment at 420–440 (LLPLLAGLGIASALGLGIAGI) is fusion peptide. The CX6CC motif lies at 497–505 (CLFLQEECC). The chain crosses the membrane as a helical span at residues 545 to 565 (LPSWLTSLMAPILFILVLLVF). At 566-617 (RPCLLNCLTHSVSRRMSSFIHTTTEGHVDKILLLRESQYKRLPQEPPEEDAV) the chain is on the cytoplasmic side.

This sequence belongs to the gamma type-C retroviral envelope protein family. The mature protein consists of a trimer of SU-TM heterodimers. The SU-TM heterodimers are attached by a labile interchain disulfide bond. Post-translationally, synthesized as an inactive precursor that is heavily N-glycosylated and processed likely by furin in the Golgi to yield the mature SU and TM proteins. The cleavage site between SU and TM requires the minimal sequence [KR]-X-[KR]-R. In terms of processing, the CXXC motif is highly conserved across a broad range of retroviral envelope proteins. It is thought to participate in the formation of a labile disulfide bond possibly with the CX6CC motif present in the transmembrane protein. Isomerization of the intersubunit disulfide bond to an SU intrachain disulfide bond is thought to occur upon receptor recognition in order to allow membrane fusion. Highly expressed in placenta where it localizes to syncytiotrophoblasts of the labyrinthine zona. Specifically localizes to syncytiotrophoblast layer I (SynT-I). Also detected at very low levels in hippocampus, brain, testis and ovary.

Its subcellular location is the cell membrane. In terms of biological role, this endogenous retroviral envelope protein has retained its original fusogenic properties. Together with Synb, participates in trophoblast fusion and the formation of a syncytium during placenta morphogenesis. Syna is essential for placental development and is specifically required for formation of syncytiotrophoblast layer I (SynT-I). Promotes muscle myoblast fusion. Does not have immunosuppressive activity. The polypeptide is Syncytin-A (Mus musculus (Mouse)).